The sequence spans 550 residues: Methionine--tRNA ligase (550 aa).

Positions 14-24 (PYANGSLHIGH) match the 'HIGH' region motif. The Zn(2+) site is built by Cys-145, Cys-148, Cys-158, and Cys-161. A 'KMSKS' region motif is present at residues 331 to 335 (KMSKS). Lys-334 provides a ligand contact to ATP.

The protein belongs to the class-I aminoacyl-tRNA synthetase family. MetG type 1 subfamily. Monomer. Zn(2+) serves as cofactor.

It is found in the cytoplasm. It catalyses the reaction tRNA(Met) + L-methionine + ATP = L-methionyl-tRNA(Met) + AMP + diphosphate. Functionally, is required not only for elongation of protein synthesis but also for the initiation of all mRNA translation through initiator tRNA(fMet) aminoacylation. The polypeptide is Methionine--tRNA ligase (Wigglesworthia glossinidia brevipalpis).